We begin with the raw amino-acid sequence, 577 residues long: Pyruvate decarboxylase (577 aa).

Asp30 and His116 together coordinate substrate. Residues 388-482 form a thiamine pyrophosphate binding region; it reads TPGYGVNDFI…FLINNDGYTI (95 aa). Asp450, Asn477, and Gly479 together coordinate Mg(2+). Residue Glu483 coordinates substrate.

It belongs to the TPP enzyme family. Homotetramer. It depends on a metal cation as a cofactor. Requires thiamine diphosphate as cofactor.

The enzyme catalyses a 2-oxocarboxylate + H(+) = an aldehyde + CO2. This Aspergillus parasiticus protein is Pyruvate decarboxylase (pdcA).